Consider the following 840-residue polypeptide: Recyclin-1 (840 aa).

The F-box domain occupies 1–48 (MDDLLKVPEIVTNIASYLSTVDYLSFQQVNKRVYAIINGKNDSKYWSL). Ser409 is modified (phosphoserine).

In terms of assembly, interacts with SKP1.

The protein resides in the cytoplasm. The protein localises to the bud neck. Its subcellular location is the cell tip. Functionally, involved in recycling plasma membrane proteins internalized by endocytosis. Required for recycling of the v-SNARE SNC1. This chain is Recyclin-1 (RCY1), found in Saccharomyces cerevisiae (strain ATCC 204508 / S288c) (Baker's yeast).